The chain runs to 174 residues: 3-hydroxyanthranilate 3,4-dioxygenase (174 aa).

Arginine 47 contacts O2. Positions 51, 57, and 95 each coordinate Fe cation. Glutamate 57 is a binding site for substrate. Substrate contacts are provided by arginine 99 and glutamate 110. Cysteine 125, cysteine 128, cysteine 162, and cysteine 165 together coordinate Fe cation.

Belongs to the 3-HAO family. Homodimer. Fe(2+) is required as a cofactor.

It catalyses the reaction 3-hydroxyanthranilate + O2 = (2Z,4Z)-2-amino-3-carboxymuconate 6-semialdehyde. It functions in the pathway cofactor biosynthesis; NAD(+) biosynthesis; quinolinate from L-kynurenine: step 3/3. Functionally, catalyzes the oxidative ring opening of 3-hydroxyanthranilate to 2-amino-3-carboxymuconate semialdehyde, which spontaneously cyclizes to quinolinate. This Burkholderia lata (strain ATCC 17760 / DSM 23089 / LMG 22485 / NCIMB 9086 / R18194 / 383) protein is 3-hydroxyanthranilate 3,4-dioxygenase.